The following is a 731-amino-acid chain: Death domain-associated protein 6 (731 aa).

The segment at 1–56 (MATDDSIIVLDDDDEDEAAAQPGPSNPASNPVSPGPEASGPSESHGDGGSSNSGSR) is disordered. The interval 1-158 (MATDDSIIVL…ASAESSGDNP (158 aa)) is necessary for interaction with USP7 and ATRX. A Phosphoserine modification is found at serine 25. A compositionally biased stretch (low complexity) spans 31 to 43 (PVSPGPEASGPSE). A Glycyl lysine isopeptide (Lys-Gly) (interchain with G-Cter in SUMO2) cross-link involves residue lysine 142. A disordered region spans residues 147–183 (PAASAESSGDNPPTDPPSDLTNTETTASEASRTRGSR). Positions 165-176 (DLTNTETTASEA) are enriched in polar residues. Coiled-coil stretches lie at residues 177–215 (SRTR…ELDD) and 368–395 (SRLD…RRAR). An interaction with histone H3.3 region spans residues 181-414 (GSRRQIQRLE…LPKASSDSGE (234 aa)). Phosphoserine is present on serine 211. The tract at residues 345-560 (GVDPALTDPT…SPVSQLSELD (216 aa)) is necessary for interaction with USP7. The segment at 381–639 (QDKSEEGERQ…LGPGPLGNSY (259 aa)) is disordered. Residues 391-395 (KRRAR) carry the Nuclear localization signal motif. The span at 398–412 (ATSQSSDLPKASSDS) shows a compositional bias: polar residues. Serine 409 and serine 421 each carry phosphoserine. A coiled-coil region spans residues 428–485 (PKAETEDEEDDEESDDEEEEEEEEEEEATEDEDEDLEQLQEDQDDEEEEEGDNEDDKS). The span at 432–482 (TEDEEDDEESDDEEEEEEEEEEEATEDEDEDLEQLQEDQDDEEEEEGDNED) shows a compositional bias: acidic residues. Residue threonine 456 is modified to Phosphothreonine. Residues serine 485, serine 488, serine 490, and serine 499 each carry the phosphoserine modification. Residues 499-509 (SNPQKGSGPQE) are compositionally biased toward polar residues. Residue lysine 503 is modified to N6-acetyllysine. Phosphoserine is present on residues serine 527, serine 551, and serine 571. The segment covering 599–608 (VTSTSFNGRV) has biased composition (polar residues). Position 617 is a phosphoserine (serine 617). An interaction with SPOP region spans residues 617-731 (SPPSKRFRKE…EEIIVLSDSD (115 aa)). A Glycyl lysine isopeptide (Lys-Gly) (interchain with G-Cter in SUMO1) cross-link involves residue lysine 621. Positions 622 to 628 (RFRKEKK) match the Nuclear localization signal motif. Phosphoserine occurs at positions 661, 662, 679, 693, 728, and 730. The segment at 663 to 688 (PLASVGPVADSSTRVDSPSHELVTSS) is disordered. Over residues 672-688 (DSSTRVDSPSHELVTSS) the composition is skewed to polar residues. The interval 724–731 (IIVLSDSD) is sumo interaction motif (SIM).

The protein belongs to the DAXX family. In terms of assembly, homomultimer. Interacts (via C-terminus) with TNFRSF6 (via death domain). Interacts with PAX5, SLC2A4/GLUT4, MAP3K5, TGFBR2, phosphorylated dimeric HSPB1/HSP27, CENPC, ETS1, sumoylated PML, UBE2I, MCRS1 and TP53. Interacts (via N-terminus) with HIPK2 and HIPK3. Interacts with HIPK1, which induces translocation from PML/POD/ND10 nuclear bodies to chromatin and enhances association with HDAC1. Interacts (non-phosphorylated) with PAX3, PAX7, DEK, HDAC1, HDAC2, HDAC3, acetylated histone H4 and histones H2A, H2B, H3, H3.3 and H4. Interacts with SPOP; mediating CUL3-dependent proteasomal degradation. Interacts with CBP; the interaction is dependent the sumoylation of CBP and suppresses CBP transcriptional activity via recruitment of HDAC2 directly in the complex with TP53 and HIPK2. Interacts with AXIN1; the interaction stimulates the interaction of DAXX with TP53, stimulates 'Ser-46' phosphorylation of TP53 on and induces cell death on UV irradiation. Interacts with MDM2; the interaction is direct. Interacts with USP7; the interaction is direct and independent of MDM2 and TP53. Part of a complex with DAXX, MDM2 and USP7 under non-stress conditions. Interacts (via N-terminus) with RASSF1 (via C-terminus); the interaction is independent of MDM2 and TP53; RASSF1 isoform A disrupts interactions among MDM2, DAXX and USP7, thus contributing to the efficient activation of TP53 by promoting MDM2 self-ubiquitination in cell-cycle checkpoint control in response to DNA damage. Interacts with ATRX to form the chromatin remodeling complex ATRX:DAXX. Interacts with HSF1 (via homotrimeric form preferentially); this interaction relieves homotrimeric HSF1 from repression of its transcriptional activity by HSP90-dependent multichaperone complex upon heat shock. Sumoylated with SUMO1 on multiple lysine residues. In terms of processing, repressor activity is down-regulated upon Ser-661 phosphorylation. Upon neuronal activation dephosphorylated by calcineurin in a Ca2+ dependent manner at Ser-661; dephosphorylation positively affects histone H3.3 loading and transcriptional activation. Post-translationally, polyubiquitinated; which is promoted by CUL3 and SPOP and results in proteasomal degradation. Ubiquitinated by MDM2; inducing its degradation. Deubiquitinated by USP7; leading to stabilize it.

The protein localises to the cytoplasm. Its subcellular location is the nucleus. The protein resides in the nucleoplasm. It is found in the PML body. It localises to the nucleolus. The protein localises to the chromosome. Its subcellular location is the centromere. Functionally, transcription corepressor known to repress transcriptional potential of several sumoylated transcription factors. Down-regulates basal and activated transcription. Its transcription repressor activity is modulated by recruiting it to subnuclear compartments like the nucleolus or PML/POD/ND10 nuclear bodies through interactions with MCSR1 and PML, respectively. Seems to regulate transcription in PML/POD/ND10 nuclear bodies together with PML and may influence TNFRSF6-dependent apoptosis thereby. Inhibits transcriptional activation of PAX3 and ETS1 through direct protein-protein interactions. Modulates PAX5 activity; the function seems to involve CREBBP. Acts as an adapter protein in a MDM2-DAXX-USP7 complex by regulating the RING-finger E3 ligase MDM2 ubiquitination activity. Under non-stress condition, in association with the deubiquitinating USP7, prevents MDM2 self-ubiquitination and enhances the intrinsic E3 ligase activity of MDM2 towards TP53, thereby promoting TP53 ubiquitination and subsequent proteasomal degradation. Upon DNA damage, its association with MDM2 and USP7 is disrupted, resulting in increased MDM2 autoubiquitination and consequently, MDM2 degradation, which leads to TP53 stabilization. Acts as a histone chaperone that facilitates deposition of histone H3.3. Acts as a targeting component of the chromatin remodeling complex ATRX:DAXX which has ATP-dependent DNA translocase activity and catalyzes the replication-independent deposition of histone H3.3 in pericentric DNA repeats outside S-phase and telomeres, and the in vitro remodeling of H3.3-containing nucleosomes. Does not affect the ATPase activity of ATRX but alleviates its transcription repression activity. Upon neuronal activation associates with regulatory elements of selected immediate early genes where it promotes deposition of histone H3.3 which may be linked to transcriptional induction of these genes. Required for the recruitment of histone H3.3:H4 dimers to PML-nuclear bodies (PML-NBs); the process is independent of ATRX and facilitated by ASF1A; PML-NBs are suggested to function as regulatory sites for the incorporation of newly synthesized histone H3.3 into chromatin. Proposed to mediate activation of the JNK pathway and apoptosis via MAP3K5 in response to signaling from TNFRSF6 and TGFBR2. Interaction with HSPB1/HSP27 may prevent interaction with TNFRSF6 and MAP3K5 and block DAXX-mediated apoptosis. In contrast, in lymphoid cells JNC activation and TNFRSF6-mediated apoptosis may not involve DAXX. Plays a role as a positive regulator of the heat shock transcription factor HSF1 activity during the stress protein response. This chain is Death domain-associated protein 6 (Daxx), found in Rattus norvegicus (Rat).